We begin with the raw amino-acid sequence, 35 residues long: Cupiennin-2a (35 aa).

Lys35 is subject to Lysine amide.

Expressed by the venom gland.

The protein localises to the secreted. This chain is Cupiennin-2a, found in Cupiennius salei (American wandering spider).